Here is a 479-residue protein sequence, read N- to C-terminus: Probable polyamine transporter At3g19553 (479 aa).

Helical transmembrane passes span 22–42 (LTLL…PFGV), 53–73 (LLAL…EALV), 86–106 (GYVV…EGFW), 130–150 (FPVL…TFSL), 160–180 (IVGF…VVMA), 236–256 (ALFG…MAGT), 275–295 (VGML…AAMS), 304–324 (MSSD…PAFF), 332–352 (TPTI…WMSF), 355–375 (IIEF…AAFV), 395–415 (FGVS…MVLA), and 420–440 (FLIS…LTLV). The tract at residues 454-479 (RPVSGVSSESQLDEEHGDESAASLLP) is disordered.

The protein belongs to the amino acid-polyamine-organocation (APC) superfamily. Polyamine:cation symporter (PHS) (TC 2.A.3.12) family.

The protein resides in the cell membrane. Functionally, probable cell membrane polyamine/proton symporter involved in the polyamine uptake in cells. The chain is Probable polyamine transporter At3g19553 from Arabidopsis thaliana (Mouse-ear cress).